Consider the following 401-residue polypeptide: Bone morphogenetic protein 4 (401 aa).

Positions 1-19 (MIPGNRMLMVILLSQVLLG) are cleaved as a signal peptide. The propeptide occupies 20–287 (GTNYASLIPD…GHALTRRSKR (268 aa)). 3 N-linked (GlcNAc...) asparagine glycosylation sites follow: N141, N204, and N238. Residues 279 to 299 (HALTRRSKRSPKQQRPRKKNK) are disordered. Positions 280–299 (ALTRRSKRSPKQQRPRKKNK) are enriched in basic residues. Disulfide bonds link C301/C366, C330/C398, and C334/C400. N343 and N358 each carry an N-linked (GlcNAc...) asparagine glycan.

It belongs to the TGF-beta family. In terms of assembly, homodimer; disulfide-linked. Forms heterodimers with the TGF-beta family member derriere. Part of a complex consisting of twsg1 and chrd. Interacts with tsku.

It localises to the secreted. The protein localises to the extracellular space. It is found in the extracellular matrix. Posterior-ventralizing factor in Xenopus mesoderm induction. Induces posteroventral mesoderm and counteracts dorsalizing signals such as activin. The polypeptide is Bone morphogenetic protein 4 (bmp4) (Xenopus laevis (African clawed frog)).